The following is a 207-amino-acid chain: Ribonuclease HII (207 aa).

Residues Asp-12 to Gly-201 form the RNase H type-2 domain. A divalent metal cation-binding residues include Asp-18, Glu-19, and Asp-110.

This sequence belongs to the RNase HII family. Mn(2+) is required as a cofactor. It depends on Mg(2+) as a cofactor.

The protein resides in the cytoplasm. It catalyses the reaction Endonucleolytic cleavage to 5'-phosphomonoester.. Endonuclease that specifically degrades the RNA of RNA-DNA hybrids. The chain is Ribonuclease HII from Pseudomonas putida (strain W619).